The primary structure comprises 315 residues: Tyrosine--tRNA ligase (315 aa).

Residue Tyr-32 participates in L-tyrosine binding. A 'HIGH' region motif is present at residues 37–45 (PSGEIHLGH). L-tyrosine is bound by residues Tyr-152, Gln-156, Asp-159, and Gln-174. The 'KMSKS' region signature appears at 208-212 (KMSSS). Ser-211 is a binding site for ATP.

Belongs to the class-I aminoacyl-tRNA synthetase family. TyrS type 3 subfamily. As to quaternary structure, homodimer.

The protein localises to the cytoplasm. It catalyses the reaction tRNA(Tyr) + L-tyrosine + ATP = L-tyrosyl-tRNA(Tyr) + AMP + diphosphate + H(+). Catalyzes the attachment of tyrosine to tRNA(Tyr) in a two-step reaction: tyrosine is first activated by ATP to form Tyr-AMP and then transferred to the acceptor end of tRNA(Tyr). The polypeptide is Tyrosine--tRNA ligase (Methanoculleus marisnigri (strain ATCC 35101 / DSM 1498 / JR1)).